A 311-amino-acid polypeptide reads, in one-letter code: Malate dehydrogenase (311 aa).

NAD(+)-binding positions include 7-13 and D34; that span reads GAAGGIG. Residues R81 and R87 each coordinate substrate. Residues N94 and 117 to 119 contribute to the NAD(+) site; that span reads ITN. 2 residues coordinate substrate: N119 and R153. H177 acts as the Proton acceptor in catalysis. M227 provides a ligand contact to NAD(+).

The protein belongs to the LDH/MDH superfamily. MDH type 1 family. In terms of assembly, homodimer.

The catalysed reaction is (S)-malate + NAD(+) = oxaloacetate + NADH + H(+). Catalyzes the reversible oxidation of malate to oxaloacetate. This chain is Malate dehydrogenase, found in Aliivibrio fischeri (strain MJ11) (Vibrio fischeri).